Here is a 962-residue protein sequence, read N- to C-terminus: RNA-binding protein 15 (962 aa).

Composition is skewed to basic and acidic residues over residues 1–10 (MRSAGREPLP), 34–52 (LRRDDLRRPSTMKGKERSP), and 59–72 (RGGEDSSSRGERSK). The interval 1–167 (MRSAGREPLP…SAPGGGDGVE (167 aa)) is disordered. Residues 82–94 (GSSSGKTDSGGSR) are compositionally biased toward low complexity. Residues 97-112 (LHLDKSSSRGGSREYE) show a composition bias toward basic and acidic residues. S108 is subject to Phosphoserine. The span at 118–129 (SSSRLHSYSSPS) shows a compositional bias: low complexity. A compositionally biased stretch (gly residues) spans 134-149 (SGGGESRSSSRGGGGE). A compositionally biased stretch (low complexity) spans 150–159 (SRSSGAASSA). The 83-residue stretch at 169 to 251 (KTLKISELGS…RPLKIEAVYV (83 aa)) folds into the RRM 1 domain. Phosphoserine occurs at positions 178, 207, and 209. Residue K245 forms a Glycyl lysine isopeptide (Lys-Gly) (interchain with G-Cter in SUMO2) linkage. Residues S252, S256, and S258 each carry the phosphoserine modification. The interval 257–297 (RSPLDKDAYAPSSSVVGTSVGSHRHAPGGGGGQRSLSPGGA) is disordered. The residue at position 265 (Y265) is a Phosphotyrosine. The span at 268–277 (SSSVVGTSVG) shows a compositional bias: low complexity. S291, S293, and S364 each carry phosphoserine. RRM domains follow at residues 373–450 (RTLF…YGKA) and 454–528 (TRLW…FADT). Glycyl lysine isopeptide (Lys-Gly) (interchain with G-Cter in SUMO2) cross-links involve residues K405, K419, and K444. The residue at position 449 (K449) is an N6-acetyllysine. Basic and acidic residues-rich tracts occupy residues 553–580 (GHRAPDPLRSARDRTPPLLYRDRDRDLY) and 612–661 (SLDR…SERP). Positions 553-779 (GHRAPDPLRS…KQDGGTAPVA (227 aa)) are disordered. T567 bears the Phosphothreonine mark. Position 577 is an asymmetric dimethylarginine; alternate; by PRMT1 (R577). R577 is subject to Omega-N-methylarginine; alternate; by PRMT1. 5 positions are modified to phosphoserine: S621, S655, S670, S674, and S701. Basic and acidic residues-rich tracts occupy residues 673 to 692 (RSPELSSNRDRYNSDNDRSS), 701 to 729 (SPVRDRRGSLEKSQSDKRDRKNSASAERD), and 742 to 751 (NPLKKEDRSD). K745 participates in a covalent cross-link: Glycyl lysine isopeptide (Lys-Gly) (interchain with G-Cter in SUMO2). Residues 754–771 (APSASTSSSKQKPPSQKQ) show a composition bias toward low complexity. Phosphoserine occurs at positions 768 and 782. Positions 778–957 (VAASSPKLCL…YLVMIIVRAK (180 aa)) constitute an SPOC domain. The disordered stretch occupies residues 866–885 (GSSDSRSSSSSATSDTAAST). The span at 867-885 (SSDSRSSSSSATSDTAAST) shows a compositional bias: low complexity. S936 is modified (phosphoserine).

The protein belongs to the RRM Spen family. Component of the WMM complex, a N6-methyltransferase complex composed of a catalytic subcomplex, named MAC, and of an associated subcomplex, named MACOM. The MAC subcomplex is composed of METTL3 and METTL14. The MACOM subcomplex is composed of WTAP, ZC3H13, CBLL1/HAKAI, VIRMA, and, in some cases of RBM15 (RBM15 or RBM15B). Also a component of a MACOM-like complex, named WTAP complex, composed of WTAP, ZC3H13, CBLL1, VIRMA, RBM15, BCLAF1 and THRAP3. Interacts with RBPJ. Interacts (via SPOC domain) with SETD1B. Interacts with NXF1, the interaction is required to promote mRNA export. Interacts with SF3B1. In terms of processing, methylated at Arg-577 by PRMT1, leading to promote ubiquitination by CNOT4 and subsequent degradation by the proteasome. Ubiquitinated by CNOT4 following methylation at Arg-577 by PRMT1.

It is found in the nucleus speckle. It localises to the nucleus. Its subcellular location is the nucleoplasm. The protein resides in the nucleus envelope. The protein localises to the nucleus membrane. In terms of biological role, RNA-binding protein that acts as a key regulator of N6-methyladenosine (m6A) methylation of RNAs, thereby regulating different processes, such as hematopoietic cell homeostasis, alternative splicing of mRNAs and X chromosome inactivation mediated by Xist RNA. Associated component of the WMM complex, a complex that mediates N6-methyladenosine (m6A) methylation of RNAs, a modification that plays a role in the efficiency of mRNA splicing and RNA processing. Plays a key role in m6A methylation, possibly by binding target RNAs and recruiting the WMM complex. Involved in random X inactivation mediated by Xist RNA: acts by binding Xist RNA and recruiting the WMM complex, which mediates m6A methylation, leading to target YTHDC1 reader on Xist RNA and promoting transcription repression activity of Xist. Required for the development of multiple tissues, such as the maintenance of the homeostasis of long-term hematopoietic stem cells and for megakaryocyte (MK) and B-cell differentiation. Regulates megakaryocyte differentiation by regulating alternative splicing of genes important for megakaryocyte differentiation; probably regulates alternative splicing via m6A regulation. Required for placental vascular branching morphogenesis and embryonic development of the heart and spleen. Acts as a regulator of thrombopoietin response in hematopoietic stem cells by regulating alternative splicing of MPL. May also function as an mRNA export factor, stimulating export and expression of RTE-containing mRNAs which are present in many retrotransposons that require to be exported prior to splicing. High affinity binding of pre-mRNA to RBM15 may allow targeting of the mRNP to the export helicase DBP5 in a manner that is independent of splicing-mediated NXF1 deposition, resulting in export prior to splicing. May be implicated in HOX gene regulation. The protein is RNA-binding protein 15 of Mus musculus (Mouse).